We begin with the raw amino-acid sequence, 87 residues long: MYCLQWLLPVLLIPKPLNPALWFSHSVFMGFYLLSFLLERKPCTICALVFLGALFLICYSCWGNCFLYHCSASELPEAAYDPAVVGT.

Helical transmembrane passes span 19-39 (PALW…FLLE) and 43-63 (CTIC…SCWG).

It belongs to the BLCAP family.

It is found in the cytoplasm. Its subcellular location is the nucleus. The protein localises to the membrane. Functionally, acts as a tumor suppressor; induces growth arrest at G(1)/S checkpoint and apoptosis via RB1-dependent and p53/TP53- and NF-kappa-B-independent mechanisms. Modulates expression of genes involved in the regulation of proliferation, cell cycle and apoptosis. The sequence is that of Apoptosis inducing factor BLCAP B (blcap-b) from Xenopus laevis (African clawed frog).